A 280-amino-acid chain; its full sequence is B3 domain-containing protein At5g25470 (280 aa).

Positions 20–114 form a DNA-binding region, TF-B3 1; it reads WKSLSPGQNW…FLEVQIFKND (95 aa). The segment at 122–153 is disordered; sequence PPEVEPETEPFHPTTPKNSHKETTTASASASA. The segment at residues 183-276 is a DNA-binding region (TF-B3 2); it reads YFVKTLTKGN…ELVTAVRVHF (94 aa).

The protein localises to the nucleus. In Arabidopsis thaliana (Mouse-ear cress), this protein is B3 domain-containing protein At5g25470.